A 343-amino-acid chain; its full sequence is Dihydroorotase (343 aa).

His-13 and His-15 together coordinate Zn(2+). Substrate is bound by residues 15–17 (HLR) and Asn-41. 3 residues coordinate Zn(2+): Lys-99, His-136, and His-174. Lys-99 carries the post-translational modification N6-carboxylysine. Substrate is bound at residue His-136. Leu-219 lines the substrate pocket. Asp-247 is a Zn(2+) binding site. Asp-247 is a catalytic residue. Residues His-251 and Ala-263 each contribute to the substrate site.

The protein belongs to the metallo-dependent hydrolases superfamily. DHOase family. Class II DHOase subfamily. As to quaternary structure, homodimer. The cofactor is Zn(2+).

It carries out the reaction (S)-dihydroorotate + H2O = N-carbamoyl-L-aspartate + H(+). It functions in the pathway pyrimidine metabolism; UMP biosynthesis via de novo pathway; (S)-dihydroorotate from bicarbonate: step 3/3. Its function is as follows. Catalyzes the reversible cyclization of carbamoyl aspartate to dihydroorotate. The polypeptide is Dihydroorotase (Shewanella sp. (strain ANA-3)).